The primary structure comprises 123 residues: Galanin peptides (123 aa).

The N-terminal stretch at 1 to 19 (MPRGSVLLLASLLLAAALS) is a signal peptide. A propeptide spanning residues 20 to 30 (ATLGLGSPVKE) is cleaved from the precursor. Residues 53–66 (SFQDKHGLAGKREL) show a composition bias toward basic and acidic residues. A disordered region spans residues 53–79 (SFQDKHGLAGKRELEPEDEARPGSFDR). An Alanine amide modification is found at Ala61. Ser116 carries the phosphoserine modification.

The protein belongs to the galanin family.

The protein localises to the secreted. Functionally, endocrine hormone of the central and peripheral nervous systems that binds and activates the G protein-coupled receptors GALR1, GALR2, and GALR3. This small neuropeptide may regulate diverse physiologic functions including contraction of smooth muscle of the gastrointestinal and genitourinary tract, growth hormone and insulin release and adrenal secretion. The protein is Galanin peptides (GAL) of Bos taurus (Bovine).